The following is a 517-amino-acid chain: Optineurin (517 aa).

Coiled coils occupy residues 15 to 127 and 174 to 453; these read NLGS…DLVA and KAES…LGRH. Disordered stretches follow at residues 216–237 and 454–488; these read KLEH…TNAS and SMSE…WQQQ. The segment covering 222–237 has biased composition (polar residues); the sequence is SSAQTSLPSAAETNAS. The segment at 487–517 adopts a CCHC NOA-type zinc-finger fold; the sequence is QQNIPDHACPKCGEVLPDLDSLQIHIMDCII. Zn(2+) is bound by residues Cys-495, Cys-498, His-511, and Cys-515.

The protein resides in the cytoplasm. Its subcellular location is the perinuclear region. The protein localises to the golgi apparatus. It is found in the trans-Golgi network. It localises to the cytoplasmic vesicle. The protein resides in the recycling endosome. Its subcellular location is the autophagosome. Functionally, probably part of the TNF-alpha signaling pathway that can shift the equilibrium toward induction of cell death. May act by regulating membrane trafficking and cellular morphogenesis. In Danio rerio (Zebrafish), this protein is Optineurin (optn).